The chain runs to 259 residues: MELPNIIQQFIGNSVLEPNKIGQSPSDVYSFNRNNETFFLKRSSTLYTETTYSVSREAKMLSWLSEKLKVPELIMTFQDEQFEFMITKAINAKPISALFLTDQELLAIYKEALNLLNSIAIIDCPFISNIDHRLKESKFFIDNQLLDDIDQDDFDTELWGDHKTYLSLWNELTETRVEERLVFSHGDITDSNIFIDKFNEIYFLDLGRAGLADEFVDISFVERCLREDASEETAKIFLKHLKNDRPDKRNYFLKLDELN.

D187 (proton acceptor) is an active-site residue.

The protein belongs to the aminoglycoside phosphotransferase family.

It catalyses the reaction kanamycin A + ATP = kanamycin 3'-phosphate + ADP + H(+). Its function is as follows. Resistance to kanamycin and structurally-related aminoglycosides, including amikacin. The chain is Aminoglycoside 3'-phosphotransferase (aphA-6) from Acinetobacter baumannii.